The sequence spans 469 residues: Secreted triacylglycerol lipase LIP3 (469 aa).

Residues 1-21 (MVSLLWKFTLLCLFLLACTSA) form the signal peptide. Residues Cys121 and Cys292 are joined by a disulfide bond. Ser205 (nucleophile) is an active-site residue. The N-linked (GlcNAc...) asparagine glycan is linked to Asn238. Catalysis depends on residues Asp352 and His386.

The protein belongs to the AB hydrolase superfamily. Lipase family. Class Lip subfamily.

Its subcellular location is the secreted. It catalyses the reaction a triacylglycerol + H2O = a diacylglycerol + a fatty acid + H(+). The catalysed reaction is a monoacylglycerol + H2O = glycerol + a fatty acid + H(+). The enzyme catalyses a diacylglycerol + H2O = a monoacylglycerol + a fatty acid + H(+). In terms of biological role, secreted lipase that hydrolyzes acylglycerol lipids such as triacylglycerols and consequently releases free fatty acid. Generates free oleic acid from the substrates mono- and diolein and hydrolyzes triolein in significant amounts. Due to an absence of fatty acid synthase genes in Malassezia species, secretory lipases are essential for the yeast to generate free fatty acids from degradation of sebum and assimilate them as lipid sources for growth. Plays an essential role at the pathogen-host interface during disease progression. Performs also the reverse reaction to build diacyl- and triacyl- glycerols from monoacylglycerols. This is Secreted triacylglycerol lipase LIP3 from Malassezia restricta (strain ATCC 96810 / NBRC 103918 / CBS 7877) (Seborrheic dermatitis infection agent).